Consider the following 59-residue polypeptide: Large ribosomal subunit protein eL37 (59 aa).

4 residues coordinate Zn(2+): cysteine 20, cysteine 23, cysteine 35, and cysteine 38. Residues 20–38 (CRRCGRHSFHRRKGYCAAC) form a C4-type zinc finger.

It belongs to the eukaryotic ribosomal protein eL37 family. Zn(2+) is required as a cofactor.

Binds to the 23S rRNA. This Archaeoglobus fulgidus (strain ATCC 49558 / DSM 4304 / JCM 9628 / NBRC 100126 / VC-16) protein is Large ribosomal subunit protein eL37 (rpl37e).